The chain runs to 331 residues: Ornithine lipid hydroxylase OlsE (331 aa).

A run of 5 helical transmembrane segments spans residues 13–33 (VSSL…YFAF), 37–57 (MHLL…ALFE), 85–105 (GGVQ…ATVA), 120–140 (WPMA…LYMA), and 189–209 (LLGA…FIGL). A Fatty acid hydroxylase domain is found at 126–260 (VVLGLVIAEF…LVIWDQLLGT (135 aa)).

This sequence belongs to the sterol desaturase family.

The protein localises to the cell inner membrane. It participates in lipid metabolism. Its function is as follows. Involved in the biosynthesis of ornithine lipids (OLs), which are phosphorus-free membrane lipids. Is responsible for the hydroxylation of OL within the ornithine moiety. This is Ornithine lipid hydroxylase OlsE from Rhizobium tropici.